Consider the following 183-residue polypeptide: Ferritin heavy chain (183 aa).

The residue at position 1 (methionine 1) is an N-acetylmethionine. The residue at position 2 (threonine 2) is an N-acetylthreonine; in Ferritin heavy chain, N-terminally processed. The Ferritin-like diiron domain maps to 11-160 (QNYHQDSEAA…DHVTNLRKMG (150 aa)). Residues glutamate 28, glutamate 63, histidine 66, glutamate 108, and glutamine 142 each coordinate Fe cation. Phosphoserine occurs at positions 179 and 183.

The protein belongs to the ferritin family. In terms of assembly, oligomer of 24 subunits. There are two types of subunits: L (light) chain and H (heavy) chain. The major chain can be light or heavy, depending on the species and tissue type. In the human liver, the heavy chain is predominant. The functional molecule forms a roughly spherical shell with a diameter of 12 nm and contains a central cavity into which the insoluble mineral iron core is deposited. Interacts with NCOA4; NCOA4 promotes targeting of the iron-binding ferritin complex to autolysosomes following starvation or iron depletion. In terms of tissue distribution, expressed in the liver.

It is found in the cytoplasm. The protein localises to the lysosome. The protein resides in the cytoplasmic vesicle. Its subcellular location is the autophagosome. It catalyses the reaction 4 Fe(2+) + O2 + 4 H(+) = 4 Fe(3+) + 2 H2O. In terms of biological role, stores iron in a soluble, non-toxic, readily available form. Important for iron homeostasis. Has ferroxidase activity. Iron is taken up in the ferrous form and deposited as ferric hydroxides after oxidation. Also plays a role in delivery of iron to cells. Mediates iron uptake in capsule cells of the developing kidney. Delivery to lysosomes is mediated by the cargo receptor NCOA4 for autophagic degradation and release of iron. This chain is Ferritin heavy chain (FTH1), found in Homo sapiens (Human).